The following is a 51-amino-acid chain: UPF0181 protein VV2_0310 (51 aa).

Belongs to the UPF0181 family.

In Vibrio vulnificus (strain CMCP6), this protein is UPF0181 protein VV2_0310.